The chain runs to 283 residues: Elongation factor Ts (283 aa).

Residues 80–83 form an involved in Mg(2+) ion dislocation from EF-Tu region; sequence TDFV.

The protein belongs to the EF-Ts family.

It is found in the cytoplasm. Associates with the EF-Tu.GDP complex and induces the exchange of GDP to GTP. It remains bound to the aminoacyl-tRNA.EF-Tu.GTP complex up to the GTP hydrolysis stage on the ribosome. The sequence is that of Elongation factor Ts from Cronobacter sakazakii (strain ATCC BAA-894) (Enterobacter sakazakii).